A 20-amino-acid chain; its full sequence is Serum amyloid P-component (20 aa).

A Pentraxin (PTX) domain is found at 1–20 (ZPIDLMGKVFVFDKELSPBI).

The protein belongs to the pentraxin family. As to quaternary structure, homopentamer. Pentraxin (or pentaxin) have a discoid arrangement of 5 non-covalently bound subunits.

The protein localises to the secreted. This chain is Serum amyloid P-component, found in Pleuronectes platessa (European plaice).